Reading from the N-terminus, the 380-residue chain is 1-deoxy-D-xylulose 5-phosphate reductoisomerase (380 aa).

Thr-10, Gly-11, Ser-12, Ile-13, Gly-35, and Asn-121 together coordinate NADPH. 1-deoxy-D-xylulose 5-phosphate is bound at residue Lys-122. Glu-123 serves as a coordination point for NADPH. Residue Asp-147 participates in Mn(2+) binding. Ser-148, Glu-149, Ser-173, and His-196 together coordinate 1-deoxy-D-xylulose 5-phosphate. A Mn(2+)-binding site is contributed by Glu-149. Gly-202 provides a ligand contact to NADPH. The 1-deoxy-D-xylulose 5-phosphate site is built by Ser-209, Asn-214, Lys-215, and Glu-218. Glu-218 serves as a coordination point for Mn(2+).

The protein belongs to the DXR family. It depends on Mg(2+) as a cofactor. Mn(2+) is required as a cofactor.

The catalysed reaction is 2-C-methyl-D-erythritol 4-phosphate + NADP(+) = 1-deoxy-D-xylulose 5-phosphate + NADPH + H(+). The protein operates within isoprenoid biosynthesis; isopentenyl diphosphate biosynthesis via DXP pathway; isopentenyl diphosphate from 1-deoxy-D-xylulose 5-phosphate: step 1/6. In terms of biological role, catalyzes the NADPH-dependent rearrangement and reduction of 1-deoxy-D-xylulose-5-phosphate (DXP) to 2-C-methyl-D-erythritol 4-phosphate (MEP). The chain is 1-deoxy-D-xylulose 5-phosphate reductoisomerase from Lachnospira eligens (strain ATCC 27750 / DSM 3376 / VPI C15-48 / C15-B4) (Eubacterium eligens).